Reading from the N-terminus, the 42-residue chain is Statherin (42 aa).

A hydroxyapatite-binding; inhibits crystal growth region spans residues 1-6; the sequence is DSSEEK. Residues Ser-2 and Ser-3 each carry the phosphoserine modification. The tract at residues 18–42 is disordered; sequence RYGPYQPFVPPPLYPQPYQPYQPQY. A hydrophobic; inhibits precipitation of calcium phosphate salts region spans residues 18-42; sequence RYGPYQPFVPPPLYPQPYQPYQPQY. The segment covering 24–42 has biased composition (pro residues); the sequence is PFVPPPLYPQPYQPYQPQY.

Belongs to the histatin/statherin family. As to expression, secreted by parotid and submandibular glands.

The protein localises to the secreted. Its function is as follows. Salivary protein that stabilizes saliva supersaturated with calcium salts by inhibiting the precipitation of calcium phosphate salts. It also modulates hydroxyapatite crystal formation on the tooth surface. The sequence is that of Statherin (STATH) from Macaca arctoides (Stump-tailed macaque).